Here is a 336-residue protein sequence, read N- to C-terminus: Ketol-acid reductoisomerase (NADP(+)) (336 aa).

Positions 3–183 constitute a KARI N-terminal Rossmann domain; the sequence is AKMYYDRDVD…GCTKAGVLET (181 aa). Residues 26-29, arginine 49, serine 52, serine 54, and 84-87 each bind NADP(+); these read YGSQ and DEQQ. Histidine 109 is an active-site residue. Glycine 135 is an NADP(+) binding site. In terms of domain architecture, KARI C-terminal knotted spans 184–329; that stretch reads TFKEETETDL…KELRDQMPFI (146 aa). Residues aspartate 192, glutamate 196, glutamate 228, and glutamate 232 each coordinate Mg(2+). Residue serine 253 coordinates substrate.

It belongs to the ketol-acid reductoisomerase family. Mg(2+) serves as cofactor.

It catalyses the reaction (2R)-2,3-dihydroxy-3-methylbutanoate + NADP(+) = (2S)-2-acetolactate + NADPH + H(+). The catalysed reaction is (2R,3R)-2,3-dihydroxy-3-methylpentanoate + NADP(+) = (S)-2-ethyl-2-hydroxy-3-oxobutanoate + NADPH + H(+). It participates in amino-acid biosynthesis; L-isoleucine biosynthesis; L-isoleucine from 2-oxobutanoate: step 2/4. The protein operates within amino-acid biosynthesis; L-valine biosynthesis; L-valine from pyruvate: step 2/4. Functionally, involved in the biosynthesis of branched-chain amino acids (BCAA). Catalyzes an alkyl-migration followed by a ketol-acid reduction of (S)-2-acetolactate (S2AL) to yield (R)-2,3-dihydroxy-isovalerate. In the isomerase reaction, S2AL is rearranged via a Mg-dependent methyl migration to produce 3-hydroxy-3-methyl-2-ketobutyrate (HMKB). In the reductase reaction, this 2-ketoacid undergoes a metal-dependent reduction by NADPH to yield (R)-2,3-dihydroxy-isovalerate. This Deinococcus radiodurans (strain ATCC 13939 / DSM 20539 / JCM 16871 / CCUG 27074 / LMG 4051 / NBRC 15346 / NCIMB 9279 / VKM B-1422 / R1) protein is Ketol-acid reductoisomerase (NADP(+)).